A 493-amino-acid chain; its full sequence is Gamma-aminobutyric acid receptor subunit alpha-3 (493 aa).

An N-terminal signal peptide occupies residues 1-28 (MITTQMWHFYVTRVGLLLLISILPGTTG). The tract at residues 27 to 54 (TGQGESRRQEPGDFVKQDIGGLSPKHAP) is disordered. At 29-276 (QGESRRQEPG…THFHLKRKIG (248 aa)) the chain is on the extracellular side. The span at 31-42 (ESRRQEPGDFVK) shows a compositional bias: basic and acidic residues. An N-linked (GlcNAc...) asparagine glycan is attached at asparagine 63. Arginine 119 is a binding site for 4-aminobutanoate. N-linked (GlcNAc...) asparagine glycosylation is found at asparagine 163 and asparagine 176. Residue threonine 182 coordinates 4-aminobutanoate. Residues cysteine 191 and cysteine 205 are joined by a disulfide bond. N-linked (GlcNAc...) asparagine glycosylation occurs at asparagine 228. 3 helical membrane-spanning segments follow: residues 277-298 (YFVIQTYLPCIMTVILSQVSFW), 304-325 (VPARTVFGVTTVLTMTTLSISA), and 338-359 (MDWFIAVCYAFVFSALIEFATV). The Cytoplasmic segment spans residues 360–458 (NYFTKRSWAW…TYNSVSKVDK (99 aa)). The residue at position 427 (serine 427) is a Phosphoserine. Threonine 428 bears the Phosphothreonine mark. Residues serine 434 and serine 443 each carry the phosphoserine modification. The chain crosses the membrane as a helical span at residues 459–480 (ISRIIFPVLFAIFNLVYWATYV).

This sequence belongs to the ligand-gated ion channel (TC 1.A.9) family. Gamma-aminobutyric acid receptor (TC 1.A.9.5) subfamily. GABRA3 sub-subfamily. As to quaternary structure, heteropentamer, formed by a combination of alpha (GABRA1-6), beta (GABRB1-3), gamma (GABRG1-3), delta (GABRD), epsilon (GABRE), rho (GABRR1-3), pi (GABRP) and theta (GABRQ) chains, each subunit exhibiting distinct physiological and pharmacological properties. Binds UBQLN1. Interacts with GPHN. As to expression, expressed in most brain regions. Expressed in lungs, in alveolar epithelium.

The protein localises to the postsynaptic cell membrane. It localises to the cell membrane. The catalysed reaction is chloride(in) = chloride(out). Functionally, alpha subunit of the heteropentameric ligand-gated chloride channel gated by gamma-aminobutyric acid (GABA), a major inhibitory neurotransmitter in the brain. GABA-gated chloride channels, also named GABA(A) receptors (GABAAR), consist of five subunits arranged around a central pore and contain GABA active binding site(s) located at the alpha and beta subunit interface(s). When activated by GABA, GABAARs selectively allow the flow of chloride anions across the cell membrane down their electrochemical gradient. Chloride influx into the postsynaptic neuron following GABAAR opening decreases the neuron ability to generate a new action potential, thereby reducing nerve transmission. In Rattus norvegicus (Rat), this protein is Gamma-aminobutyric acid receptor subunit alpha-3.